A 239-amino-acid polypeptide reads, in one-letter code: Zwei Ig domain protein zig-7 (239 aa).

The signal sequence occupies residues 1-21; sequence MKLINCISIALLCTLVDFSSA. N-linked (GlcNAc...) asparagine glycosylation is present at Asn43. The Ig-like C2-type domain maps to 145 to 211; sequence PHVIGAERRG…TEDHIGKYRC (67 aa). A disulfide bond links Cys164 and Cys211.

Expressed in body wall muscles.

It localises to the secreted. Its function is as follows. Probably not involved in maintaining the position of ASI and ASH head neuron cell bodies and ventral nerve cord axons of PVQ, PVP, RMEV, AVK and HSN neurons. The polypeptide is Zwei Ig domain protein zig-7 (Caenorhabditis elegans).